The sequence spans 349 residues: S-adenosylmethionine:tRNA ribosyltransferase-isomerase (349 aa).

Belongs to the QueA family. Monomer.

It localises to the cytoplasm. The enzyme catalyses 7-aminomethyl-7-carbaguanosine(34) in tRNA + S-adenosyl-L-methionine = epoxyqueuosine(34) in tRNA + adenine + L-methionine + 2 H(+). It participates in tRNA modification; tRNA-queuosine biosynthesis. Its function is as follows. Transfers and isomerizes the ribose moiety from AdoMet to the 7-aminomethyl group of 7-deazaguanine (preQ1-tRNA) to give epoxyqueuosine (oQ-tRNA). In Pseudomonas putida (strain GB-1), this protein is S-adenosylmethionine:tRNA ribosyltransferase-isomerase.